An 855-amino-acid chain; its full sequence is tRNA(Met) cytidine acetyltransferase TmcA (855 aa).

ATP is bound by residues Q260, 286–295 (GRGKSALLGI), and R438. Positions 480–663 (PDLRYWFEDP…GEYSVAVIRP (184 aa)) constitute an N-acetyltransferase domain. Acetyl-CoA-binding positions include 590–592 (IAT), 597–603 (MRHGLGS), E630, and R637.

Belongs to the RNA cytidine acetyltransferase family. TmcA subfamily.

Its subcellular location is the cytoplasm. The enzyme catalyses cytidine(34) in elongator tRNA(Met) + acetyl-CoA + ATP + H2O = N(4)-acetylcytidine(34) in elongator tRNA(Met) + ADP + phosphate + CoA + H(+). Catalyzes the formation of N(4)-acetylcytidine (ac(4)C) at the wobble position of tRNA(Met), by using acetyl-CoA as an acetyl donor and ATP (or GTP). The chain is tRNA(Met) cytidine acetyltransferase TmcA from Methanopyrus kandleri (strain AV19 / DSM 6324 / JCM 9639 / NBRC 100938).